The chain runs to 60 residues: Large ribosomal subunit protein bL32 (60 aa).

Belongs to the bacterial ribosomal protein bL32 family.

This is Large ribosomal subunit protein bL32 (rpmF) from Thermotoga maritima (strain ATCC 43589 / DSM 3109 / JCM 10099 / NBRC 100826 / MSB8).